The chain runs to 204 residues: Endothelin-3 (204 aa).

The signal sequence occupies residues 1 to 17 (MELRLWFLFGLTVTSAA). A disordered region spans residues 18–71 (GPVPRPQPGDAGRSGVPRAPSATKETMAMVATRGPSPRSSGQEQEPGPFGELAA). Positions 18–80 (GPVPRPQPGD…AKGGPVRYRA (63 aa)) are excised as a propeptide. 2 cysteine pairs are disulfide-bonded: Cys83–Cys97 and Cys85–Cys93. The propeptide occupies 104–204 (INTPERTVPY…KSRTDKARRL (101 aa)). A disordered region spans residues 115–140 (LSNHRGSVRGRRSAGPSPQSSQPSRG). The segment covering 127-140 (SAGPSPQSSQPSRG) has biased composition (low complexity). The segment at 144–158 (CACAESQDRACVYFC) is endothelin-like. Positions 166-204 (GASRTPETPDKEAGKPAGRATGGLHPRRLKSRTDKARRL) are disordered.

This sequence belongs to the endothelin/sarafotoxin family.

The protein resides in the secreted. In terms of biological role, endothelins are endothelium-derived vasoconstrictor peptides. This is Endothelin-3 (EDN3) from Sus scrofa (Pig).